We begin with the raw amino-acid sequence, 331 residues long: RNA 3'-terminal phosphate cyclase (331 aa).

ATP contacts are provided by residues glutamine 100 and 276–280; that span reads HLADQ. The active-site Tele-AMP-histidine intermediate is the histidine 301.

Belongs to the RNA 3'-terminal cyclase family. Type 1 subfamily.

It localises to the cytoplasm. It catalyses the reaction a 3'-end 3'-phospho-ribonucleotide-RNA + ATP = a 3'-end 2',3'-cyclophospho-ribonucleotide-RNA + AMP + diphosphate. Catalyzes the conversion of 3'-phosphate to a 2',3'-cyclic phosphodiester at the end of RNA. The mechanism of action of the enzyme occurs in 3 steps: (A) adenylation of the enzyme by ATP; (B) transfer of adenylate to an RNA-N3'P to produce RNA-N3'PP5'A; (C) and attack of the adjacent 2'-hydroxyl on the 3'-phosphorus in the diester linkage to produce the cyclic end product. The biological role of this enzyme is unknown but it is likely to function in some aspects of cellular RNA processing. This is RNA 3'-terminal phosphate cyclase from Methanococcoides burtonii (strain DSM 6242 / NBRC 107633 / OCM 468 / ACE-M).